The primary structure comprises 126 residues: UPF0325 protein VFMJ11_2099 (126 aa).

Belongs to the UPF0325 family.

In Aliivibrio fischeri (strain MJ11) (Vibrio fischeri), this protein is UPF0325 protein VFMJ11_2099.